The sequence spans 100 residues: NADH-quinone oxidoreductase subunit K (100 aa).

The next 3 helical transmembrane spans lie at tyrosine 4–isoleucine 24, isoleucine 29–phenylalanine 49, and valine 60–isoleucine 80.

Belongs to the complex I subunit 4L family. In terms of assembly, NDH-1 is composed of 14 different subunits. Subunits NuoA, H, J, K, L, M, N constitute the membrane sector of the complex.

It is found in the cell inner membrane. It carries out the reaction a quinone + NADH + 5 H(+)(in) = a quinol + NAD(+) + 4 H(+)(out). NDH-1 shuttles electrons from NADH, via FMN and iron-sulfur (Fe-S) centers, to quinones in the respiratory chain. The immediate electron acceptor for the enzyme in this species is believed to be ubiquinone. Couples the redox reaction to proton translocation (for every two electrons transferred, four hydrogen ions are translocated across the cytoplasmic membrane), and thus conserves the redox energy in a proton gradient. The protein is NADH-quinone oxidoreductase subunit K of Persephonella marina (strain DSM 14350 / EX-H1).